A 577-amino-acid polypeptide reads, in one-letter code: MHSTEVQAKPLFSWKALGWALLYFWFFSTLLQAIIYISGYSGTNGIRDSLLFSSLWLIPVFLFPKRIKIIAAVIGVVLWAASLAALCYYVIYGQEFSQSVLFVMFETNTNEASEYLSQYFSLKIVLIALAYTAVAVLLWTRLRPVYIPKPWRYVVSFALLYGLILHPIAMNTFIKNKPFEKTLDNLASRMEPAAPWQFLTGYYQYRQQLNSLTKLLNENNALPPLANFKDESGNEPRTLVLVIGESTQRGRMSLYGYPRETTPELDALHKTDPNLTVFNNVVTSRPYTIEILQQALTFANEKNPDLYLTQPSLMNMMKQAGYKTFWITNQQTMTARNTMLTVFSRQTDKQYYMNQQRTQSAREYDTNVLKPFQEVLNDPAPKKLIIVHLLGTHIKYKYRYPENQGKFDGNTDHVPPGLNAEELESYNDYDNANLYNDHVVASLIKDFKAANPNGFLVYFSDHGEEVYDTPPHKTQGRNEDNPTRHMYTIPFLLWTSEKWQATHPRDFSQDVDRKYSLAELIHTWSDLAGLSYDGYDPTRSVVNPQFKETTRWIGNPYKKNALIDYDTLPYGDQVGNQ.

5 helical membrane passes run 17 to 37 (LGWALLYFWFFSTLLQAIIYI), 44 to 64 (NGIRDSLLFSSLWLIPVFLFP), 69 to 89 (IIAAVIGVVLWAASLAALCYY), 119 to 139 (YFSLKIVLIALAYTAVAVLLW), and 154 to 174 (VVSFALLYGLILHPIAMNTFI).

It belongs to the phosphoethanolamine transferase family. EptC/CptA subfamily. In terms of assembly, forms a complex with an unidentified protein of approximately 36 kDa.

It is found in the cell inner membrane. It functions in the pathway bacterial outer membrane biogenesis; LPS core biosynthesis. Functionally, catalyzes the addition of a phosphoethanolamine moiety to the outer membrane lipopolysaccharide core. The polypeptide is Phosphoethanolamine transferase EptC (eptC) (Escherichia coli (strain K12)).